Reading from the N-terminus, the 122-residue chain is Large ribosomal subunit protein bL12 (122 aa).

It belongs to the bacterial ribosomal protein bL12 family. Homodimer. Part of the ribosomal stalk of the 50S ribosomal subunit. Forms a multimeric L10(L12)X complex, where L10 forms an elongated spine to which 2 to 4 L12 dimers bind in a sequential fashion. Binds GTP-bound translation factors.

Functionally, forms part of the ribosomal stalk which helps the ribosome interact with GTP-bound translation factors. Is thus essential for accurate translation. The protein is Large ribosomal subunit protein bL12 of Staphylococcus haemolyticus (strain JCSC1435).